Reading from the N-terminus, the 181-residue chain is Protein Syd (181 aa).

The protein belongs to the Syd family.

It localises to the cell inner membrane. In terms of biological role, interacts with the SecY protein in vivo. May bind preferentially to an uncomplexed state of SecY, thus functioning either as a chelating agent for excess SecY in the cell or as a regulatory factor that negatively controls the translocase function. This is Protein Syd from Salmonella arizonae (strain ATCC BAA-731 / CDC346-86 / RSK2980).